Consider the following 279-residue polypeptide: 3-methyl-2-oxobutanoate hydroxymethyltransferase (279 aa).

The Mg(2+) site is built by Asp43 and Asp82. Residues 43–44, Asp82, and Lys112 each bind 3-methyl-2-oxobutanoate; that span reads DS. Residue Glu114 participates in Mg(2+) binding. Glu181 (proton acceptor) is an active-site residue.

The protein belongs to the PanB family. As to quaternary structure, homodecamer; pentamer of dimers. Mg(2+) serves as cofactor.

It localises to the cytoplasm. It carries out the reaction 3-methyl-2-oxobutanoate + (6R)-5,10-methylene-5,6,7,8-tetrahydrofolate + H2O = 2-dehydropantoate + (6S)-5,6,7,8-tetrahydrofolate. It participates in cofactor biosynthesis; (R)-pantothenate biosynthesis; (R)-pantoate from 3-methyl-2-oxobutanoate: step 1/2. Functionally, catalyzes the reversible reaction in which hydroxymethyl group from 5,10-methylenetetrahydrofolate is transferred onto alpha-ketoisovalerate to form ketopantoate. This is 3-methyl-2-oxobutanoate hydroxymethyltransferase from Halalkalibacterium halodurans (strain ATCC BAA-125 / DSM 18197 / FERM 7344 / JCM 9153 / C-125) (Bacillus halodurans).